Consider the following 147-residue polypeptide: Acireductone dioxygenase (147 aa).

Fe(2+) is bound by residues His-74, His-76, Glu-80, and His-119. Ni(2+) contacts are provided by His-74, His-76, Glu-80, and His-119.

It belongs to the acireductone dioxygenase (ARD) family. The cofactor is Fe(2+). It depends on Ni(2+) as a cofactor.

The protein localises to the cytoplasm. The protein resides in the nucleus. The catalysed reaction is 1,2-dihydroxy-5-(methylsulfanyl)pent-1-en-3-one + O2 = 4-methylsulfanyl-2-oxobutanoate + formate + 2 H(+). It catalyses the reaction 1,2-dihydroxy-5-(methylsulfanyl)pent-1-en-3-one + O2 = 3-(methylsulfanyl)propanoate + CO + formate + 2 H(+). The protein operates within amino-acid biosynthesis; L-methionine biosynthesis via salvage pathway; L-methionine from S-methyl-5-thio-alpha-D-ribose 1-phosphate: step 5/6. Catalyzes 2 different reactions between oxygen and the acireductone 1,2-dihydroxy-3-keto-5-methylthiopentene (DHK-MTPene) depending upon the metal bound in the active site. Fe-containing acireductone dioxygenase (Fe-ARD) produces formate and 2-keto-4-methylthiobutyrate (KMTB), the alpha-ketoacid precursor of methionine in the methionine recycle pathway. Ni-containing acireductone dioxygenase (Ni-ARD) produces methylthiopropionate, carbon monoxide and formate, and does not lie on the methionine recycle pathway. In Dictyostelium discoideum (Social amoeba), this protein is Acireductone dioxygenase (adi1).